We begin with the raw amino-acid sequence, 294 residues long: Fatty acyl-CoA reductase Rv0547c (294 aa).

Positions 49, 50, 52, 72, 97, 98, 124, 192, 196, 225, and 227 each coordinate NADP(+). The active-site Proton acceptor is Tyr-192.

Belongs to the short-chain dehydrogenases/reductases (SDR) family.

It is found in the host mitochondrion. It carries out the reaction hexadecanal + NADP(+) + CoA = hexadecanoyl-CoA + NADPH + H(+). Functionally, oxidoreductase that promotes the persistence of M.tuberculosis in host macrophages by reprogramming the fatty acid metabolism in host mitochondria. When localized in the host mitochondria, it potentially acts on unknown lipid substrates and converts them into products that directly or indirectly alter the lipid profile of the mitochondria. This change in lipid profile results in increased mitochondrial membrane fluidity, enhanced endogenous fatty acid oxidation and increased mitochondrial spare respiratory capacity. All these events eventually favor M.tuberculosis persistence in the host macrophages. In vitro, can catalyze the NADPH-dependent reduction of palmitoyl-CoA (hexadecanoyl-CoA). In Mycobacterium tuberculosis (strain ATCC 25618 / H37Rv), this protein is Fatty acyl-CoA reductase Rv0547c.